The primary structure comprises 199 residues: Probable molybdenum cofactor guanylyltransferase (199 aa).

Residues 6-8 (LAG), Lys18, Asp65, and Asp97 each bind GTP. Asp97 is a binding site for Mg(2+).

The protein belongs to the MobA family. Mg(2+) serves as cofactor.

It is found in the cytoplasm. It carries out the reaction Mo-molybdopterin + GTP + H(+) = Mo-molybdopterin guanine dinucleotide + diphosphate. Its function is as follows. Transfers a GMP moiety from GTP to Mo-molybdopterin (Mo-MPT) cofactor (Moco or molybdenum cofactor) to form Mo-molybdopterin guanine dinucleotide (Mo-MGD) cofactor. This chain is Probable molybdenum cofactor guanylyltransferase, found in Staphylococcus aureus (strain COL).